Reading from the N-terminus, the 348-residue chain is MSTNHIQPLLDLLYQGKSLSREQAFEIFSALIRGEMSEATMAGMLVALKIRGETIDEISGAADAMRAAAKTFPYSNGDNLGNGIVDIVGTGGDGFNTINISTTAAFVAAAAGAKVAKHGNRSVSSKSGSSDLLAQFGIDLTMSPDTASRCLDALNLCFLFAPHYHGGVKHAGPVRQALKTRTLFNVLGPLINPARPEFMLLGVYSPELVLPIAKVLKALGTKRAMVVHGSGLDEVALHGNTLVAELKDGDIIEYQLTPADLGVPLAQISDLEGGEPAQNALITEAILRGRGTDAHANAVAINAGCALYVCGIADSVKAGTLLALSTIQSGKAFELLSQLAKVSSETKE.

Residues Gly-89, 92-93, Thr-97, 99-102, 117-125, and Ser-129 each bind 5-phospho-alpha-D-ribose 1-diphosphate; these read GD, NIST, and KHGNRSVSS. Position 89 (Gly-89) interacts with anthranilate. Ser-101 is a binding site for Mg(2+). Residue Asn-120 participates in anthranilate binding. Arg-175 contributes to the anthranilate binding site. The Mg(2+) site is built by Asp-233 and Glu-234.

The protein belongs to the anthranilate phosphoribosyltransferase family. Homodimer. Mg(2+) is required as a cofactor.

The enzyme catalyses N-(5-phospho-beta-D-ribosyl)anthranilate + diphosphate = 5-phospho-alpha-D-ribose 1-diphosphate + anthranilate. The protein operates within amino-acid biosynthesis; L-tryptophan biosynthesis; L-tryptophan from chorismate: step 2/5. Functionally, catalyzes the transfer of the phosphoribosyl group of 5-phosphorylribose-1-pyrophosphate (PRPP) to anthranilate to yield N-(5'-phosphoribosyl)-anthranilate (PRA). The chain is Anthranilate phosphoribosyltransferase from Shewanella sp. (strain W3-18-1).